The following is a 100-amino-acid chain: Small ribosomal subunit protein uS14c (100 aa).

This sequence belongs to the universal ribosomal protein uS14 family. Part of the 30S ribosomal subunit.

It is found in the plastid. The protein resides in the chloroplast. In terms of biological role, binds 16S rRNA, required for the assembly of 30S particles. This is Small ribosomal subunit protein uS14c from Bigelowiella natans (Pedinomonas minutissima).